The primary structure comprises 64 residues: uncharacterized protein (64 aa).

This is an uncharacterized protein from Sulfolobus islandicus filamentous virus (isolate Iceland/Hveragerdi) (SIFV).